The following is a 441-amino-acid chain: Probable D-serine dehydratase (441 aa).

K115 carries the post-translational modification N6-(pyridoxal phosphate)lysine.

Belongs to the serine/threonine dehydratase family. DsdA subfamily. It depends on pyridoxal 5'-phosphate as a cofactor.

The enzyme catalyses D-serine = pyruvate + NH4(+). The sequence is that of Probable D-serine dehydratase from Fusobacterium nucleatum subsp. nucleatum (strain ATCC 25586 / DSM 15643 / BCRC 10681 / CIP 101130 / JCM 8532 / KCTC 2640 / LMG 13131 / VPI 4355).